The sequence spans 460 residues: UDP-N-acetylmuramate--L-alanine ligase (460 aa).

112 to 118 (GTHGKTT) contributes to the ATP binding site.

Belongs to the MurCDEF family.

Its subcellular location is the cytoplasm. It carries out the reaction UDP-N-acetyl-alpha-D-muramate + L-alanine + ATP = UDP-N-acetyl-alpha-D-muramoyl-L-alanine + ADP + phosphate + H(+). The protein operates within cell wall biogenesis; peptidoglycan biosynthesis. In terms of biological role, cell wall formation. In Pelobacter propionicus (strain DSM 2379 / NBRC 103807 / OttBd1), this protein is UDP-N-acetylmuramate--L-alanine ligase.